The primary structure comprises 198 residues: Large ribosomal subunit protein bL21 (198 aa).

It belongs to the bacterial ribosomal protein bL21 family. In terms of assembly, part of the 50S ribosomal subunit. Contacts protein L20.

Functionally, this protein binds to 23S rRNA in the presence of protein L20. The polypeptide is Large ribosomal subunit protein bL21 (Ruegeria sp. (strain TM1040) (Silicibacter sp.)).